We begin with the raw amino-acid sequence, 535 residues long: GMP synthase [glutamine-hydrolyzing] (535 aa).

The region spanning 21 to 211 is the Glutamine amidotransferase type-1 domain; the sequence is LIVILDFGSQ…VYHICDCEPT (191 aa). Cysteine 98 (nucleophile) is an active-site residue. Residues histidine 185 and glutamate 187 contribute to the active site. Residues 212-410 enclose the GMPS ATP-PPase domain; sequence WTTAAFVEEA…LGLPEEIVQR (199 aa). 239–245 lines the ATP pocket; the sequence is SGGVDSS.

As to quaternary structure, homodimer.

It carries out the reaction XMP + L-glutamine + ATP + H2O = GMP + L-glutamate + AMP + diphosphate + 2 H(+). The protein operates within purine metabolism; GMP biosynthesis; GMP from XMP (L-Gln route): step 1/1. Its function is as follows. Catalyzes the synthesis of GMP from XMP. This is GMP synthase [glutamine-hydrolyzing] from Thermosynechococcus vestitus (strain NIES-2133 / IAM M-273 / BP-1).